The primary structure comprises 533 residues: RNA end formation protein 2 (533 aa).

3 disordered regions span residues 187–254, 260–279, and 321–344; these read SNST…SSMK, LFNK…SKKK, and SSST…PLKK. Residues 206 to 222 show a composition bias toward basic and acidic residues; the sequence is KIKDSEKEKEKEKDKSK. A compositionally biased stretch (low complexity) spans 242 to 252; that stretch reads SSPSPTASTSS. Over residues 321–338 the composition is skewed to low complexity; it reads SSSTSGSSTTTVATPASS.

Interacts with FIR1. Component of the cleavage and polyadenylation factor (CPF) complex, which is composed of PTI1, SYC1, SSU72, GLC7, MPE1, REF2, PFS2, PTA1, YSH1/BRR5, SWD2, CFT2/YDH1, YTH1, CFT1/YHH1, FIP1 and PAP1. Component of the APT complex, which is a subcomplex of CPF, and is composed of PTI1, SYC1, SSU72, GLC7, REF2, PTA1 and SWD2.

The protein localises to the nucleus. RNA-binding component of the cleavage and polyadenylation factor (CPF) complex, which plays a key role in polyadenylation-dependent pre-mRNA 3'-end formation and cooperates with cleavage factors including the CFIA complex and NAB4/CFIB. Negative regulator of poly(A) synthesis. Component of the APT complex, which may be involved in polyadenylation-independent transcript 3'-end formation. REF2 is required for 3'-end formation of snoRNAs. The sequence is that of RNA end formation protein 2 (REF2) from Saccharomyces cerevisiae (strain ATCC 204508 / S288c) (Baker's yeast).